The primary structure comprises 379 residues: MPTVFPHDSVGLVTPQTAHFSEPLALACGRSLPAYDLIYETYGQLNAARSNAVLICHALSGHHHAAGFHSADDRKPGWWDSCIGPGKPIDTDKFFVVSLNNLGGCNGSTGPSSIDPDTGKPFGANFPVVTVEDWVNSQARLADVLNIDTWAAVIGGSLGGMQALQWTISYPDRVRHCLAIASAPKLSAQNIAFNEVARQAILTDPEFHGGSFQERGVIPKRGLMLARMVGHITYLSDDSMGEKFGRGLKSEKLNYDFHSVEFQVESYLRYQGEEFSGRFDANTYLLMTKALDYFDPAANFNDDLAKTFANATARFCVMSFTTDWRFSPARSRELVDALMAARKDVCYLEIDAPQGHDAFLIPIPRYLQAFGNYMNRISL.

In terms of domain architecture, AB hydrolase-1 spans 51–360 (NAVLICHALS…DAPQGHDAFL (310 aa)). The active-site Nucleophile is the S157. R227 contacts substrate. Catalysis depends on residues D323 and H356. Substrate is bound at residue D357.

It belongs to the AB hydrolase superfamily. MetX family. Homodimer.

The protein resides in the cytoplasm. It carries out the reaction L-homoserine + succinyl-CoA = O-succinyl-L-homoserine + CoA. The protein operates within amino-acid biosynthesis; L-methionine biosynthesis via de novo pathway; O-succinyl-L-homoserine from L-homoserine: step 1/1. In terms of biological role, transfers a succinyl group from succinyl-CoA to L-homoserine, forming succinyl-L-homoserine. The protein is Homoserine O-succinyltransferase of Pseudomonas syringae pv. tomato (strain ATCC BAA-871 / DC3000).